The sequence spans 102 residues: Small ribosomal subunit protein uS10 (102 aa).

This sequence belongs to the universal ribosomal protein uS10 family. In terms of assembly, part of the 30S ribosomal subunit.

Functionally, involved in the binding of tRNA to the ribosomes. The sequence is that of Small ribosomal subunit protein uS10 from Streptococcus thermophilus (strain ATCC BAA-491 / LMD-9).